We begin with the raw amino-acid sequence, 103 residues long: UPF0473 protein LCA_0390 (103 aa).

It belongs to the UPF0473 family.

In Latilactobacillus sakei subsp. sakei (strain 23K) (Lactobacillus sakei subsp. sakei), this protein is UPF0473 protein LCA_0390.